We begin with the raw amino-acid sequence, 312 residues long: Pantothenate kinase (312 aa).

Position 97–104 (97–104 (GSVAVGKS)) interacts with ATP.

This sequence belongs to the prokaryotic pantothenate kinase family.

Its subcellular location is the cytoplasm. The enzyme catalyses (R)-pantothenate + ATP = (R)-4'-phosphopantothenate + ADP + H(+). It functions in the pathway cofactor biosynthesis; coenzyme A biosynthesis; CoA from (R)-pantothenate: step 1/5. In Mycolicibacterium paratuberculosis (strain ATCC BAA-968 / K-10) (Mycobacterium paratuberculosis), this protein is Pantothenate kinase.